The chain runs to 259 residues: Short-chain dehydrogenase chry4 (259 aa).

Residues R37, D55, N81, Y154, K158, V185, and T187 each contribute to the NADP(+) site. Y154 acts as the Proton donor in catalysis. K158 serves as the catalytic Lowers pKa of active site Tyr.

This sequence belongs to the short-chain dehydrogenases/reductases (SDR) family.

The protein operates within pigment biosynthesis. Short-chain dehydrogenase; part of the gene cluster that mediates the biosynthesis of the yellow pigment chrysogine. Pyruvic acid and anthranilic acid are likely substrates for the nonribosomal peptide synthetase chry1/NRPS14, with pyruvic acid adenylated by the first A domain and anthranilic acid by the second. If pyruvic acid and anthranilic acid are merged and released from chry1/NRPS14 by hydrolysis, a subsequent amidation would lead to 2-pyruvoylaminobenzamide. This process is probably catalyzed by the amidotransferase chry2 using glutamine as amino donor. The dehydrogenase chry5 that has a terminal berberine bridge domain for C-N cyclization could catalyze the cyclization of 2-pyruvoylaminobenzamide to yield acetyl-4(3H)-quinazolidinone. A final reduction of acetyl-4(3H)-quinazolidinone catalyzed by the oxidoreductase chry4 would result in chrysogine. The polypeptide is Short-chain dehydrogenase chry4 (Gibberella zeae (strain ATCC MYA-4620 / CBS 123657 / FGSC 9075 / NRRL 31084 / PH-1) (Wheat head blight fungus)).